Here is a 368-residue protein sequence, read N- to C-terminus: 3-dehydroquinate synthase (368 aa).

NAD(+) is bound by residues D71 to K76, G105 to D109, T129 to T130, K142, K151, and T169 to T172. Zn(2+) is bound by residues E184, H247, and H264.

The protein belongs to the sugar phosphate cyclases superfamily. Dehydroquinate synthase family. Co(2+) is required as a cofactor. The cofactor is Zn(2+). It depends on NAD(+) as a cofactor.

It localises to the cytoplasm. The enzyme catalyses 7-phospho-2-dehydro-3-deoxy-D-arabino-heptonate = 3-dehydroquinate + phosphate. It functions in the pathway metabolic intermediate biosynthesis; chorismate biosynthesis; chorismate from D-erythrose 4-phosphate and phosphoenolpyruvate: step 2/7. Its function is as follows. Catalyzes the conversion of 3-deoxy-D-arabino-heptulosonate 7-phosphate (DAHP) to dehydroquinate (DHQ). The polypeptide is 3-dehydroquinate synthase (Cupriavidus necator (strain ATCC 17699 / DSM 428 / KCTC 22496 / NCIMB 10442 / H16 / Stanier 337) (Ralstonia eutropha)).